Consider the following 211-residue polypeptide: Thymidylate kinase (211 aa).

Glycine 10–serine 17 serves as a coordination point for ATP.

It belongs to the thymidylate kinase family.

The enzyme catalyses dTMP + ATP = dTDP + ADP. Phosphorylation of dTMP to form dTDP in both de novo and salvage pathways of dTTP synthesis. This chain is Thymidylate kinase, found in Clavibacter michiganensis subsp. michiganensis (strain NCPPB 382).